A 190-amino-acid chain; its full sequence is MPRANEIKKGMVLNYNGKLLLVKDIDIQSPTARGAATLYKMRFSDVRTGLKVEERFKGDDIVDTVTLTRRYVDFSYVDGNEYVFMDKEDYTPYTFTKDQIEEELMFMPEGGMPDMQVLTWDGQLLALELPQTVDLEIIETAPGIKGASASARNKPATLSTGLVIQVPEYLSPGEKIRIHIEERRYMGRAD.

This sequence belongs to the elongation factor P family.

In Escherichia fergusonii (strain ATCC 35469 / DSM 13698 / CCUG 18766 / IAM 14443 / JCM 21226 / LMG 7866 / NBRC 102419 / NCTC 12128 / CDC 0568-73), this protein is Elongation factor P-like protein.